A 272-amino-acid polypeptide reads, in one-letter code: Sulfate transporter CysZ (272 aa).

Helical transmembrane passes span 29-49 (FVII…WLFI), 66-86 (WLSF…LLLF), 148-168 (IIAL…VPVL), and 219-239 (FVPV…TLMW).

It belongs to the CysZ family.

Its subcellular location is the cell inner membrane. Functionally, high affinity, high specificity proton-dependent sulfate transporter, which mediates sulfate uptake. Provides the sulfur source for the cysteine synthesis pathway. In Haemophilus influenzae (strain 86-028NP), this protein is Sulfate transporter CysZ.